Reading from the N-terminus, the 348-residue chain is Histidinol-phosphate aminotransferase (348 aa).

Lys-207 is subject to N6-(pyridoxal phosphate)lysine.

This sequence belongs to the class-II pyridoxal-phosphate-dependent aminotransferase family. Histidinol-phosphate aminotransferase subfamily. In terms of assembly, homodimer. Pyridoxal 5'-phosphate serves as cofactor.

It catalyses the reaction L-histidinol phosphate + 2-oxoglutarate = 3-(imidazol-4-yl)-2-oxopropyl phosphate + L-glutamate. Its pathway is amino-acid biosynthesis; L-histidine biosynthesis; L-histidine from 5-phospho-alpha-D-ribose 1-diphosphate: step 7/9. The polypeptide is Histidinol-phosphate aminotransferase (Rippkaea orientalis (strain PCC 8801 / RF-1) (Cyanothece sp. (strain PCC 8801))).